Here is a 325-residue protein sequence, read N- to C-terminus: Dehydrogenase/reductase SDR family member 7B (325 aa).

The Cytoplasmic segment spans residues 1-17 (MISPSSRKGMLKERAMD). Residues 18–38 (LVTQTTILPLLFGCLGIFSLF) form a helical; Signal-anchor for type II membrane protein membrane-spanning segment. The Lumenal segment spans residues 39 to 325 (RLLQRTRSKA…ARKERKSKNS (287 aa)). Residues Ser-62 and Leu-64 each coordinate NAD(+). Residue Ser-194 coordinates substrate. Residues Tyr-207, Lys-211, and Thr-242 each coordinate NAD(+). Tyr-207 acts as the Proton acceptor in catalysis.

It belongs to the short-chain dehydrogenases/reductases (SDR) family.

The protein resides in the endoplasmic reticulum membrane. Putative oxidoreductase. The sequence is that of Dehydrogenase/reductase SDR family member 7B (Dhrs7b) from Rattus norvegicus (Rat).